A 303-amino-acid chain; its full sequence is Hydroxyacylglutathione hydrolase, mitochondrial (303 aa).

Residues His97, His99, Asp101, His102, His153, and Asp177 each coordinate Zn(2+). Substrate is bound by residues 186 to 188, 216 to 218, and 292 to 295; these read KFF, HEY, and RKEK. A Zn(2+)-binding site is contributed by His216.

Belongs to the metallo-beta-lactamase superfamily. Glyoxalase II family. In terms of assembly, monomer. Zn(2+) is required as a cofactor.

The protein resides in the mitochondrion matrix. It localises to the cytoplasm. It carries out the reaction an S-(2-hydroxyacyl)glutathione + H2O = a 2-hydroxy carboxylate + glutathione + H(+). The enzyme catalyses (R)-S-lactoylglutathione + H2O = (R)-lactate + glutathione + H(+). Thiolesterase that catalyzes the hydrolysis of S-D-lactoyl-glutathione to form glutathione and D-lactic acid. This is Hydroxyacylglutathione hydrolase, mitochondrial (hagh) from Danio rerio (Zebrafish).